The following is a 436-amino-acid chain: Histidine--tRNA ligase (436 aa).

Belongs to the class-II aminoacyl-tRNA synthetase family.

The protein localises to the cytoplasm. The enzyme catalyses tRNA(His) + L-histidine + ATP = L-histidyl-tRNA(His) + AMP + diphosphate + H(+). This Thermococcus kodakarensis (strain ATCC BAA-918 / JCM 12380 / KOD1) (Pyrococcus kodakaraensis (strain KOD1)) protein is Histidine--tRNA ligase.